The following is a 640-amino-acid chain: UvrABC system protein C (640 aa).

Residues 22 to 101 enclose the GIY-YIG domain; sequence NDPGCYLMKD…IKSHQPYFNV (80 aa). Residues 211–246 form the UVR domain; that stretch reads DELRILLEKQMISFSESLKFEEAGSVRDQLKGIDRL.

It belongs to the UvrC family. In terms of assembly, interacts with UvrB in an incision complex.

The protein localises to the cytoplasm. Functionally, the UvrABC repair system catalyzes the recognition and processing of DNA lesions. UvrC both incises the 5' and 3' sides of the lesion. The N-terminal half is responsible for the 3' incision and the C-terminal half is responsible for the 5' incision. The sequence is that of UvrABC system protein C from Prochlorococcus marinus (strain NATL2A).